Reading from the N-terminus, the 201-residue chain is Dephospho-CoA kinase (201 aa).

Residues 4-201 enclose the DPCK domain; sequence IIGITGGIAS…LEGGRQDDRD (198 aa). 12–17 contributes to the ATP binding site; sequence ASGKST.

The protein belongs to the CoaE family.

It localises to the cytoplasm. The enzyme catalyses 3'-dephospho-CoA + ATP = ADP + CoA + H(+). The protein operates within cofactor biosynthesis; coenzyme A biosynthesis; CoA from (R)-pantothenate: step 5/5. Its function is as follows. Catalyzes the phosphorylation of the 3'-hydroxyl group of dephosphocoenzyme A to form coenzyme A. This chain is Dephospho-CoA kinase, found in Streptococcus pneumoniae serotype 4 (strain ATCC BAA-334 / TIGR4).